The chain runs to 217 residues: Ras-related protein RGP2 (217 aa).

Residues 19 to 26 (GDSGVGKS), 67 to 71 (DTAGQ), and 125 to 128 (NKSD) each bind GTP. S-geranylgeranyl cysteine attachment occurs at residues C214 and C215.

The protein belongs to the small GTPase superfamily. Rab family.

The protein localises to the cell membrane. This is Ras-related protein RGP2 (RGP2) from Oryza sativa subsp. japonica (Rice).